The chain runs to 339 residues: Protein FAM76B (339 aa).

Ala2 bears the N-acetylalanine mark. A phosphoserine mark is found at Ser22 and Ser148. The tract at residues 144–243 (EQRKSLGSSH…INQSADSGGT (100 aa)) is disordered. Low complexity predominate over residues 148–160 (SLGSSHSNSSSSS). A compositionally biased stretch (basic residues) spans 167–189 (HHPKHHHHHHHHHHRHSSSHHKI). Position 193 is a phosphoserine (Ser193). Position 215 is a phosphothreonine (Thr215). Basic and acidic residues predominate over residues 215–224 (TPKKKPKLES). Residues 228 to 243 (NGDSSSINQSADSGGT) are compositionally biased toward polar residues. Residues 248–328 (LISQLKEEVM…QVAALSKGKK (81 aa)) are a coiled coil.

It belongs to the FAM76 family. In terms of assembly, interacts with HNRNPA2B1 (via C-terminus); the interaction results in retention of HNRNPA2B1 in the nucleus and inhibition of the NF-kappa-B-mediated inflammatory pathway.

Its subcellular location is the nucleus speckle. Functionally, negatively regulates the NF-kappa-B-mediated inflammatory pathway by preventing the translocation of HNRNPA2B1 from the nucleus to the cytoplasm. Inhibits the PI3K/Akt/NF-kappa-B pathway-mediated polarization of M1 macrophages by binding to and stabilizing PIK3CD mRNA, resulting in increased levels of PIK3CD protein and increased levels of phosphorylated downstream target AKT which leads to decreased NF-kappa-B signaling. This Homo sapiens (Human) protein is Protein FAM76B (FAM76B).